Here is a 176-residue protein sequence, read N- to C-terminus: Crossover junction endodeoxyribonuclease RuvC (176 aa).

Active-site residues include Asp12, Glu72, and Asp144. Mg(2+)-binding residues include Asp12, Glu72, and Asp144.

It belongs to the RuvC family. In terms of assembly, homodimer which binds Holliday junction (HJ) DNA. The HJ becomes 2-fold symmetrical on binding to RuvC with unstacked arms; it has a different conformation from HJ DNA in complex with RuvA. In the full resolvosome a probable DNA-RuvA(4)-RuvB(12)-RuvC(2) complex forms which resolves the HJ. It depends on Mg(2+) as a cofactor.

It is found in the cytoplasm. The enzyme catalyses Endonucleolytic cleavage at a junction such as a reciprocal single-stranded crossover between two homologous DNA duplexes (Holliday junction).. In terms of biological role, the RuvA-RuvB-RuvC complex processes Holliday junction (HJ) DNA during genetic recombination and DNA repair. Endonuclease that resolves HJ intermediates. Cleaves cruciform DNA by making single-stranded nicks across the HJ at symmetrical positions within the homologous arms, yielding a 5'-phosphate and a 3'-hydroxyl group; requires a central core of homology in the junction. The consensus cleavage sequence is 5'-(A/T)TT(C/G)-3'. Cleavage occurs on the 3'-side of the TT dinucleotide at the point of strand exchange. HJ branch migration catalyzed by RuvA-RuvB allows RuvC to scan DNA until it finds its consensus sequence, where it cleaves and resolves the cruciform DNA. In Methylocella silvestris (strain DSM 15510 / CIP 108128 / LMG 27833 / NCIMB 13906 / BL2), this protein is Crossover junction endodeoxyribonuclease RuvC.